The sequence spans 855 residues: Protein KRI1 homolog (855 aa).

Disordered regions lie at residues 47–67 (VSES…VDPK), 82–117 (KDPC…KAKP), 130–196 (EHNG…KTKE), 312–342 (SLRR…MKEL), 424–453 (YDPR…CDYD), and 589–855 (KSLY…KKDN). The span at 48–64 (SESEFDSDSSSSEEDEV) shows a compositional bias: acidic residues. Over residues 82–91 (KDPCIYDKGT) the composition is skewed to basic and acidic residues. A phosphoserine mark is found at Ser-95, Ser-97, Ser-98, Ser-137, and Ser-138. Residues 160-176 (EEERRLKAEFRKVMNKE) show a composition bias toward basic and acidic residues. Ser-179 carries the post-translational modification Phosphoserine. The stretch at 307 to 362 (RTIEQSLRRTDDKRKEKRKELKERKDQEKQQKMKELELVKEMKRKEIDEKIRKLKA) forms a coiled coil. Residues 441–452 (CEDDDFNMDCDY) are compositionally biased toward acidic residues. A compositionally biased stretch (low complexity) spans 609-619 (VTPAEATAPAE). A compositionally biased stretch (basic residues) spans 630-640 (KSKRKRLKRKA). Basic and acidic residues-rich tracts occupy residues 650-664 (VLKE…KEAD) and 674-692 (SSKK…DANQ). Polar residues-rich tracts occupy residues 720 to 748 (VQNG…TTES), 756 to 773 (SNGN…QQRQ), and 792 to 805 (ANGT…NQKP). Low complexity predominate over residues 812 to 826 (KKTNNFKAKNKQNNN). Over residues 842-855 (RKFHKREKYGKKDN) the composition is skewed to basic residues.

The protein belongs to the KRI1 family.

In Drosophila melanogaster (Fruit fly), this protein is Protein KRI1 homolog.